Consider the following 150-residue polypeptide: Deoxyuridine 5'-triphosphate nucleotidohydrolase (150 aa).

Substrate-binding positions include 69–71 (RSG), Asn82, 86–88 (LID), and Lys96.

Belongs to the dUTPase family. Mg(2+) serves as cofactor.

It catalyses the reaction dUTP + H2O = dUMP + diphosphate + H(+). The protein operates within pyrimidine metabolism; dUMP biosynthesis; dUMP from dCTP (dUTP route): step 2/2. This enzyme is involved in nucleotide metabolism: it produces dUMP, the immediate precursor of thymidine nucleotides and it decreases the intracellular concentration of dUTP so that uracil cannot be incorporated into DNA. In Neisseria meningitidis serogroup B (strain ATCC BAA-335 / MC58), this protein is Deoxyuridine 5'-triphosphate nucleotidohydrolase.